The primary structure comprises 691 residues: Elongation factor G (691 aa).

In terms of domain architecture, tr-type G spans 8 to 282 (ERVRNIGIAA…AVVDYLPAPV (275 aa)). GTP contacts are provided by residues 17-24 (AHIDAGKT), 81-85 (DTPGH), and 135-138 (NKMD).

This sequence belongs to the TRAFAC class translation factor GTPase superfamily. Classic translation factor GTPase family. EF-G/EF-2 subfamily.

It is found in the cytoplasm. In terms of biological role, catalyzes the GTP-dependent ribosomal translocation step during translation elongation. During this step, the ribosome changes from the pre-translocational (PRE) to the post-translocational (POST) state as the newly formed A-site-bound peptidyl-tRNA and P-site-bound deacylated tRNA move to the P and E sites, respectively. Catalyzes the coordinated movement of the two tRNA molecules, the mRNA and conformational changes in the ribosome. The polypeptide is Elongation factor G (Prochlorococcus marinus (strain AS9601)).